Here is a 62-residue protein sequence, read N- to C-terminus: Weak neurotoxin 5 (62 aa).

5 cysteine pairs are disulfide-bonded: C3–C24, C6–C11, C17–C40, C44–C54, and C55–C60.

It belongs to the three-finger toxin family. Ancestral subfamily. Orphan group II sub-subfamily. As to expression, expressed by the venom gland.

It localises to the secreted. In terms of biological role, binds with low affinity to muscular (alpha-1-beta-1-delta-epsilon/CHRNA1-CHRNB1-CHRND-CHRNE) and very low affinity to neuronal (alpha-7/CHRNA7) nicotinic acetylcholine receptor (nAChR). The chain is Weak neurotoxin 5 from Naja naja (Indian cobra).